The following is a 188-amino-acid chain: Elongation factor P (188 aa).

The protein belongs to the elongation factor P family.

It is found in the cytoplasm. It participates in protein biosynthesis; polypeptide chain elongation. Involved in peptide bond synthesis. Stimulates efficient translation and peptide-bond synthesis on native or reconstituted 70S ribosomes in vitro. Probably functions indirectly by altering the affinity of the ribosome for aminoacyl-tRNA, thus increasing their reactivity as acceptors for peptidyl transferase. In Rickettsia peacockii (strain Rustic), this protein is Elongation factor P.